Here is a 248-residue protein sequence, read N- to C-terminus: Inhibitor of growth protein 4 (248 aa).

A coiled-coil region spans residues 25–118 (FQLMRDLDQR…ADLKEKQIES (94 aa)). Lysine 112, lysine 127, and lysine 129 each carry N6-acetyllysine. Residues 115-160 (QIESSDYDSSSSKGKKSRTQKEKKAARARSKGKNSDEEAPKAAQKK) are disordered. The Bipartite nuclear localization signal motif lies at 127-147 (KGKKSRTQKEKKAARARSKGK). At arginine 132 the chain carries Citrulline. Residues lysine 145, lysine 147, and lysine 155 each carry the N6-acetyllysine modification. At arginine 165 the chain carries Citrulline. A PHD-type zinc finger spans residues 195-244 (PTYCLCHQVSYGEMIGCDNPDCSIERFHFACVGLTTKPRGKWFCPRCSQE). The Zn(2+) site is built by cysteine 198, cysteine 200, cysteine 211, cysteine 216, histidine 222, cysteine 225, cysteine 238, and cysteine 241.

Belongs to the ING family. In terms of assembly, homodimer. Component of the HBO1 complex composed of KAT7/HBO1, MEAF6, ING4 or ING5, and one scaffold subunit: complexes containing BRPF scaffold (BRPF1, BRD1/BRPF2 or BRPF3) direct KAT7/HBO1 specificity towards H3K14ac, while complexes containing JADE scaffold (JADE1, JADE2 and JADE3) mediate acetylation of histone H4. Interacts with H3K4me3 and to a lesser extent with H3K4me2, the interaction augments KAT7/HBO1 acetylation activity on H3 tails. Interacts with EP300, RELA and TP53; these interactions may be indirect. Interacts with EGLN1. Interacts with BCL2A1. In terms of processing, citrullination by PADI4 within the nuclear localization signal disrupts the interaction with p53 and increases susceptibility to degradation.

The protein resides in the nucleus. Its function is as follows. Component of HBO1 complexes, which specifically mediate acetylation of histone H3 at 'Lys-14' (H3K14ac), and have reduced activity toward histone H4. Through chromatin acetylation it may function in DNA replication. May inhibit tumor progression by modulating the transcriptional output of signaling pathways which regulate cell proliferation. Can suppress brain tumor angiogenesis through transcriptional repression of RELA/NFKB3 target genes when complexed with RELA. May also specifically suppress loss of contact inhibition elicited by activated oncogenes such as MYC. Represses hypoxia inducible factor's (HIF) activity by interacting with HIF prolyl hydroxylase 2 (EGLN1). Can enhance apoptosis induced by serum starvation in mammary epithelial cell line HC11. The chain is Inhibitor of growth protein 4 (ING4) from Bos taurus (Bovine).